A 909-amino-acid chain; its full sequence is Protein translocase subunit SecA (909 aa).

Residues Gln-87, 105 to 109, and Asp-507 each bind ATP; that span reads GEGKT. Disordered regions lie at residues 567–586 and 859–909; these read RRIDNQLRGRSGRQGDPGSS and YSEA…GKLD. Over residues 865–889 the composition is skewed to basic and acidic residues; the sequence is EHQSVTEGHEAKQQPFVRKSDKIGR. 4 residues coordinate Zn(2+): Cys-893, Cys-895, Cys-904, and His-905. Basic residues predominate over residues 899-909; that stretch reads RKYKQCHGKLD.

It belongs to the SecA family. As to quaternary structure, monomer and homodimer. Part of the essential Sec protein translocation apparatus which comprises SecA, SecYEG and auxiliary proteins SecDF-YajC and YidC. Zn(2+) serves as cofactor.

It is found in the cell inner membrane. Its subcellular location is the cytoplasm. It carries out the reaction ATP + H2O + cellular proteinSide 1 = ADP + phosphate + cellular proteinSide 2.. Functionally, part of the Sec protein translocase complex. Interacts with the SecYEG preprotein conducting channel. Has a central role in coupling the hydrolysis of ATP to the transfer of proteins into and across the cell membrane, serving both as a receptor for the preprotein-SecB complex and as an ATP-driven molecular motor driving the stepwise translocation of polypeptide chains across the membrane. This Nitrosomonas eutropha (strain DSM 101675 / C91 / Nm57) protein is Protein translocase subunit SecA.